The following is a 528-amino-acid chain: Probable serine/threonine-protein kinase 380R (528 aa).

Positions 70–96 (VKIPKSKSPPKVKSPKRKKSPVRRRVS) are disordered. Over residues 73–95 (PKSKSPPKVKSPKRKKSPVRRRV) the composition is skewed to basic residues. A Protein kinase domain is found at 156-507 (FTNVKAVGKG…LANVLIHKIF (352 aa)). ATP-binding positions include 162-170 (VGKGSFGTV) and K187. The active-site Proton acceptor is D302.

This sequence belongs to the protein kinase superfamily. Ser/Thr protein kinase family.

The catalysed reaction is L-seryl-[protein] + ATP = O-phospho-L-seryl-[protein] + ADP + H(+). It catalyses the reaction L-threonyl-[protein] + ATP = O-phospho-L-threonyl-[protein] + ADP + H(+). This Invertebrate iridescent virus 6 (IIV-6) protein is Probable serine/threonine-protein kinase 380R.